A 186-amino-acid polypeptide reads, in one-letter code: Probable RNA 2'-phosphotransferase (186 aa).

This sequence belongs to the KptA/TPT1 family.

Removes the 2'-phosphate from RNA via an intermediate in which the phosphate is ADP-ribosylated by NAD followed by a presumed transesterification to release the RNA and generate ADP-ribose 1''-2''-cyclic phosphate (APPR&gt;P). May function as an ADP-ribosylase. In Pectobacterium carotovorum subsp. carotovorum (strain PC1), this protein is Probable RNA 2'-phosphotransferase.